Reading from the N-terminus, the 430-residue chain is Methylenetetrahydrofolate--tRNA-(uracil-5-)-methyltransferase TrmFO (430 aa).

FAD is bound at residue 9–14; it reads GAGLAG.

Belongs to the MnmG family. TrmFO subfamily. Requires FAD as cofactor.

The protein localises to the cytoplasm. The catalysed reaction is uridine(54) in tRNA + (6R)-5,10-methylene-5,6,7,8-tetrahydrofolate + NADH + H(+) = 5-methyluridine(54) in tRNA + (6S)-5,6,7,8-tetrahydrofolate + NAD(+). The enzyme catalyses uridine(54) in tRNA + (6R)-5,10-methylene-5,6,7,8-tetrahydrofolate + NADPH + H(+) = 5-methyluridine(54) in tRNA + (6S)-5,6,7,8-tetrahydrofolate + NADP(+). In terms of biological role, catalyzes the folate-dependent formation of 5-methyl-uridine at position 54 (M-5-U54) in all tRNAs. This chain is Methylenetetrahydrofolate--tRNA-(uracil-5-)-methyltransferase TrmFO, found in Fervidobacterium nodosum (strain ATCC 35602 / DSM 5306 / Rt17-B1).